The following is a 496-amino-acid chain: RNA-binding motif protein, Y chromosome, family 1 member E (496 aa).

The region spanning 8–85 (GKLFIGGLNR…KAIKVEQAKK (78 aa)) is the RRM domain. Disordered regions lie at residues 67 to 348 (DMNG…PHRD) and 453 to 496 (DQRN…SSRY). 2 stretches are compositionally biased toward low complexity: residues 97-114 (PASSRNRSPSGSLRSARG) and 149-159 (PVKRGPSSRSG). The span at 175-184 (NSWMGSQGPM) shows a compositional bias: polar residues. Composition is skewed to basic and acidic residues over residues 204-214 (RNDRMSTRHDG), 242-253 (DNGHSNRDEHSS), 276-289 (AYRDYGHSRRDESY), 313-326 (GYRDYGHSRRHESY), 335-348 (SSRETRDYAPPHRD), and 484-496 (GESRSEKGDSSRY).

As to quaternary structure, interacts with splicing factor proteins SFRS3/SRP20, TRA2B/SFRS10, KHDRBS1/SAM68 and KHDRBS3. As to expression, testis-specific.

It localises to the nucleus. Its function is as follows. RNA-binding protein which may be involved in spermatogenesis. Required for sperm development, possibly by participating in pre-mRNA splicing in the testis. This chain is RNA-binding motif protein, Y chromosome, family 1 member E (RBMY1E), found in Homo sapiens (Human).